The sequence spans 1977 residues: Voltage-dependent L-type calcium channel subunit alpha-1F (1977 aa).

The span at methionine 1–threonine 11 shows a compositional bias: basic and acidic residues. The tract at residues methionine 1–valine 60 is disordered. Topologically, residues methionine 1–lysine 92 are cytoplasmic. Basic residues predominate over residues proline 48 to threonine 59. An I repeat occupies asparagine 79–phenylalanine 375. A helical transmembrane segment spans residues proline 93–valine 111. Over tyrosine 112–glutamine 129 the chain is Extracellular. The helical transmembrane segment at valine 130–tyrosine 149 threads the bilayer. The Cytoplasmic portion of the chain corresponds to glycine 150–asparagine 161. Residues glycine 162 to leucine 180 form a helical membrane-spanning segment. Residues glutamate 181 to aspartate 201 are Extracellular-facing. Residues valine 202–valine 220 traverse the membrane as a helical segment. The Cytoplasmic portion of the chain corresponds to proline 221–histidine 239. Residues isoleucine 240–phenylalanine 259 traverse the membrane as a helical segment. The Extracellular portion of the chain corresponds to leucine 260 to leucine 347. N-linked (GlcNAc...) asparagine glycosylation occurs at asparagine 295. Position 330 (glutamate 330) interacts with Ca(2+). A helical membrane pass occupies residues proline 348–serine 372. The Cytoplasmic portion of the chain corresponds to glycine 373–asparagine 529. The tract at residues glutamine 395–glutamate 412 is binding to the beta subunit. 2 disordered regions span residues aspartate 418–alanine 441 and serine 455–glutamate 488. Low complexity predominate over residues serine 455 to serine 469. The II repeat unit spans residues asparagine 515 to leucine 761. The helical transmembrane segment at alanine 530 to glutamate 549 threads the bilayer. The Extracellular segment spans residues histidine 550–alanine 564. The helical transmembrane segment at asparagine 565–leucine 583 threads the bilayer. Over glycine 584–serine 591 the chain is Cytoplasmic. A helical membrane pass occupies residues phenylalanine 592–leucine 610. The Extracellular portion of the chain corresponds to valine 611–glycine 620. A helical transmembrane segment spans residues isoleucine 621–tryptophan 639. The Cytoplasmic segment spans residues alanine 640–serine 658. Residues leucine 659–glycine 679 form a helical membrane-spanning segment. The Extracellular portion of the chain corresponds to glycine 680–leucine 733. A Ca(2+)-binding site is contributed by glutamate 711. A helical transmembrane segment spans residues valine 734–valine 758. Topologically, residues aspartate 759 to histidine 871 are cytoplasmic. The interval glycine 767–valine 830 is disordered. Positions threonine 768–proline 783 are enriched in basic and acidic residues. Over residues aspartate 807–glycine 826 the composition is skewed to acidic residues. Residues asparagine 858–phenylalanine 1140 form an III repeat. A helical membrane pass occupies residues valine 872–alanine 890. Topologically, residues glutamate 891 to tyrosine 906 are extracellular. A helical transmembrane segment spans residues phenylalanine 907–phenylalanine 926. The Cytoplasmic portion of the chain corresponds to glycine 927 to serine 938. Residues tryptophan 939–isoleucine 957 form a helical membrane-spanning segment. Residues histidine 958–serine 963 lie on the Extracellular side of the membrane. Residues valine 964–alanine 983 traverse the membrane as a helical segment. The Cytoplasmic portion of the chain corresponds to lysine 984–asparagine 1002. A helical membrane pass occupies residues isoleucine 1003–phenylalanine 1022. The Extracellular segment spans residues lysine 1023–glutamate 1112. The tract at residues arginine 1060–asparagine 1150 is dihydropyridine binding. Residue glutamate 1086 participates in Ca(2+) binding. Residues isoleucine 1113 to valine 1133 form a helical membrane-spanning segment. Residues glycine 1134–alanine 1190 lie on the Cytoplasmic side of the membrane. An IV repeat occupies asparagine 1177–phenylalanine 1444. Residues alanine 1191–methionine 1209 traverse the membrane as a helical segment. Residues glutamine 1210–isoleucine 1224 lie on the Extracellular side of the membrane. Residues leucine 1225 to phenylalanine 1244 traverse the membrane as a helical segment. The Cytoplasmic portion of the chain corresponds to lysine 1245–threonine 1251. A helical membrane pass occupies residues aspartate 1252–glutamate 1273. Over valine 1274–isoleucine 1290 the chain is Extracellular. Residues serine 1291 to glycine 1310 form a helical membrane-spanning segment. At glutamate 1311–tyrosine 1329 the chain is on the cytoplasmic side. Residues valine 1330–phenylalanine 1349 form a helical membrane-spanning segment. Topologically, residues glycine 1350–phenylalanine 1416 are extracellular. Residues arginine 1397–lysine 1463 form a dihydropyridine binding region. Positions glutamate 1409–serine 1452 are phenylalkylamine binding. Residues alanine 1417 to methionine 1441 form a helical membrane-spanning segment. Topologically, residues aspartate 1442–leucine 1977 are cytoplasmic. Disordered stretches follow at residues cysteine 1637–aspartate 1754 and aspartate 1816–proline 1841. Residues aspartate 1638–aspartate 1657 are compositionally biased toward acidic residues. Composition is skewed to polar residues over residues asparagine 1661 to serine 1670, threonine 1702 to asparagine 1716, glycine 1733 to glutamine 1743, and serine 1829 to threonine 1840.

The protein belongs to the calcium channel alpha-1 subunit (TC 1.A.1.11) family. CACNA1F subfamily. In terms of assembly, voltage-dependent calcium channels are multisubunit complexes, consisting of alpha-1, alpha-2, beta and delta subunits in a 1:1:1:1 ratio. The channel activity is directed by the pore-forming and voltage-sensitive alpha-1 subunit. In many cases, this subunit is sufficient to generate voltage-sensitive calcium channel activity. The auxiliary subunits beta and alpha-2/delta linked by a disulfide bridge regulate the channel activity. Interacts (via IQ domain) with CABP4; in a calcium independent manner. Interacts with CABP4; suppresses robust calcium-dependent inactivation of channel without enhancing the hyperpolarized voltage-dependent activation. As to expression, expression in skeletal muscle and retina. Isoform 4 is expressed in retina.

The protein localises to the membrane. The catalysed reaction is Ca(2+)(in) = Ca(2+)(out). Functionally, voltage-sensitive calcium channels (VSCC) mediate the entry of calcium ions into excitable cells and are also involved in a variety of calcium-dependent processes, including muscle contraction, hormone or neurotransmitter release, gene expression, cell motility, cell division and cell death. The isoform alpha-1F gives rise to L-type calcium currents. Long-lasting (L-type) calcium channels belong to the 'high-voltage activated' (HVA) group. They are blocked by dihydropyridines (DHP), phenylalkylamines, and by benzothiazepines. Activates at more negative voltages and does not undergo calcium-dependent inactivation (CDI), due to incoming calcium ions, during depolarization. Its function is as follows. Voltage-dependent L-type calcium channel activates at more hyperpolarized voltages and exhibits a robust calcium-dependent inactivation (CDI), due to incoming calcium ions, during depolarizations. Voltage-sensitive calcium channels (VSCC) mediate the entry of calcium ions into excitable cells and are also involved in a variety of calcium-dependent processes, including muscle contraction, hormone or neurotransmitter release, gene expression, cell motility, cell division and cell death. In Homo sapiens (Human), this protein is Voltage-dependent L-type calcium channel subunit alpha-1F.